The sequence spans 75 residues: Small ribosomal subunit protein bS18 (75 aa).

The protein belongs to the bacterial ribosomal protein bS18 family. In terms of assembly, part of the 30S ribosomal subunit. Forms a tight heterodimer with protein bS6.

Binds as a heterodimer with protein bS6 to the central domain of the 16S rRNA, where it helps stabilize the platform of the 30S subunit. The polypeptide is Small ribosomal subunit protein bS18 (Buchnera aphidicola subsp. Schizaphis graminum (strain Sg)).